Reading from the N-terminus, the 440-residue chain is Adenylosuccinate synthetase (440 aa).

GTP-binding positions include 13–19 (GDEGKGK) and 41–43 (GHT). Residue aspartate 14 is the Proton acceptor of the active site. Mg(2+)-binding residues include aspartate 14 and glycine 41. Residues 14–17 (DEGK), 39–42 (NAGH), threonine 135, arginine 149, glutamine 230, threonine 245, and arginine 313 contribute to the IMP site. Residue histidine 42 is the Proton donor of the active site. 309–315 (TVTKRKR) contributes to the substrate binding site. GTP-binding positions include arginine 315, 341 to 343 (KLD), and 423 to 425 (STG).

It belongs to the adenylosuccinate synthetase family. Homodimer. Requires Mg(2+) as cofactor.

The protein localises to the cytoplasm. The enzyme catalyses IMP + L-aspartate + GTP = N(6)-(1,2-dicarboxyethyl)-AMP + GDP + phosphate + 2 H(+). It functions in the pathway purine metabolism; AMP biosynthesis via de novo pathway; AMP from IMP: step 1/2. Functionally, plays an important role in the de novo pathway of purine nucleotide biosynthesis. Catalyzes the first committed step in the biosynthesis of AMP from IMP. The chain is Adenylosuccinate synthetase from Methylobacillus flagellatus (strain ATCC 51484 / DSM 6875 / VKM B-1610 / KT).